The primary structure comprises 261 residues: CD40 ligand (261 aa).

Residues 1-22 (MVETYHQPAPRSAATGLPVSMK) lie on the Cytoplasmic side of the membrane. Residues 23–43 (IFMYLLTVFLITQMIGSALFA) traverse the membrane as a helical; Signal-anchor for type II membrane protein segment. The Extracellular segment spans residues 44–261 (VYLHRRLDKI…GFTSFGLLKL (218 aa)). The region spanning 122-261 (IAAHVISEAS…GFTSFGLLKL (140 aa)) is the THD domain. A disulfide bridge connects residues cysteine 178 and cysteine 218. The N-linked (GlcNAc...) asparagine glycan is linked to asparagine 240.

The protein belongs to the tumor necrosis factor family. Homotrimer. Interacts with CD28. CD40 ligand, soluble form: Exists as either a monomer or a homotrimer. Forms a ternary complex between CD40 and integrins for CD40-CD40LG signaling. Post-translationally, the soluble form derives from the membrane form by proteolytic processing.

It is found in the cell membrane. It localises to the cell surface. The protein localises to the secreted. Functionally, cytokine that acts as a ligand to CD40/TNFRSF5. Costimulates T-cell proliferation and cytokine production. Its cross-linking on T-cells generates a costimulatory signal which enhances the production of IL4 and IL10 in conjunction with the TCR/CD3 ligation and CD28 costimulation. Induces the activation of NF-kappa-B. Induces the activation of kinases MAPK8 and PAK2 in T-cells. Mediates B-cell proliferation in the absence of co-stimulus as well as IgE production in the presence of IL4. Involved in immunoglobulin class switching. Acts as a ligand for integrins, specifically ITGA5:ITGB1 and ITGAV:ITGB3; both integrins and the CD40 receptor are required for activation of CD40-CD40LG signaling, which have cell-type dependent effects, such as B-cell activation, NF-kappa-B signaling and anti-apoptotic signaling. In Aotus trivirgatus (Three-striped night monkey), this protein is CD40 ligand (CD40LG).